Reading from the N-terminus, the 571-residue chain is Isthmin-2 (571 aa).

Positions 1 to 26 are cleaved as a signal peptide; that stretch reads MRALRDRAGLLLCVLLLAALLEAALG. Disordered regions lie at residues 30-60, 116-141, and 257-294; these read KKPR…LKEE, ANTT…LREE, and EKDR…DEEE. Over residues 116–131 the composition is skewed to polar residues; sequence ANTTLSTPNPDTQASA. The N-linked (GlcNAc...) asparagine glycan is linked to Asn-117. Residues 257–268 show a composition bias toward basic and acidic residues; sequence EKDRAPGEKGEE. The span at 269–294 shows a compositional bias: acidic residues; it reads KEEDEDYPSEDIEGEDQEDKEEDEEE. A glycan (N-linked (GlcNAc...) asparagine) is linked at Asn-300. In terms of domain architecture, TSP type-1 spans 327-371; the sequence is EPQKEWSPWSPCSGNCSTGKQQRTRPCGYGCTATETRTCDLPSCP. Cystine bridges form between Cys-338–Cys-365, Cys-342–Cys-370, and Cys-353–Cys-357. N-linked (GlcNAc...) asparagine glycosylation occurs at Asn-392. In terms of domain architecture, AMOP spans 396-559; that stretch reads MHDQDVDSCE…RACTDNPLEE (164 aa).

Belongs to the isthmin family. As to expression, expressed at high levels in the placenta and at moderate levels in the pancreas, kidney, heart, liver, lung, brain and skeletal muscle.

The protein localises to the secreted. The protein is Isthmin-2 (ISM2) of Homo sapiens (Human).